We begin with the raw amino-acid sequence, 92 residues long: WAP four-disulfide core domain protein 12 (92 aa).

A signal peptide spans 1 to 23 (MGSSRFLVLMVSLALVTLVAAEG). In terms of domain architecture, WAP spans 27–74 (NIEKPEVCPADNVRCIKSDPPQCHTDQDCQGIRKCCYLHCGFKCVIPV). 4 cysteine pairs are disulfide-bonded: Cys-34–Cys-62, Cys-41–Cys-66, Cys-49–Cys-61, and Cys-55–Cys-70.

The protein resides in the secreted. Antibacterial protein. Putative acid-stable proteinase inhibitor. This is WAP four-disulfide core domain protein 12 (WFDC12) from Aotus nancymaae (Ma's night monkey).